We begin with the raw amino-acid sequence, 2142 residues long: U5 small nuclear ribonucleoprotein 200 kDa helicase (2142 aa).

3 disordered regions span residues 52–74 (MGDR…RQKR), 211–234 (EESE…QDEG), and 366–396 (RQLD…DGGA). Positions 369–391 (DTGKSEDQEEGEARGSKRGKGDA) are enriched in basic and acidic residues. A Helicase ATP-binding 1 domain is found at 490-673 (KAALDSDENM…FLRVKPDKGL (184 aa)). ATP is bound at residue 503–510 (APTGAGKT). The short motif at 615–618 (DEIH) is the DEIH box element. Residues 684 to 917 (SLEQQYIGVT…GTVQHLQDAV (234 aa)) form the Helicase C-terminal 1 domain. The 306-residue stretch at 981-1286 (VTDLGRIASH…GAETQLPVSF (306 aa)) folds into the SEC63 1 domain. In terms of domain architecture, Helicase ATP-binding 2 spans 1337 to 1511 (NAVYNSDENV…WLGCNPNATF (175 aa)). 1350–1357 (APTGSGKM) provides a ligand contact to ATP. The DELQ box signature appears at 1453 to 1456 (DELQ). One can recognise a Helicase C-terminal 2 domain in the interval 1544 to 1752 (PVYNAILKYS…TIENKQDAVD (209 aa)). Positions 1811 to 2128 (PLNLGMIAAY…GCDQEYKFSI (318 aa)) constitute an SEC63 2 domain.

Belongs to the helicase family. SKI2 subfamily.

Its subcellular location is the nucleus. It catalyses the reaction ATP + H2O = ADP + phosphate + H(+). In terms of biological role, catalyzes the ATP-dependent unwinding of U4/U6 RNA duplices, an essential step in the assembly of a catalytically active spliceosome. Plays a role in pre-mRNA splicing. In Drosophila melanogaster (Fruit fly), this protein is U5 small nuclear ribonucleoprotein 200 kDa helicase.